Consider the following 1048-residue polypeptide: Nonsense-mediated mRNA decay protein 5 (1048 aa).

In terms of domain architecture, Importin N-terminal spans 24–104; the sequence is AETHLKNASK…KDMLIKTMVS (81 aa). Residue serine 977 is modified to Phosphoserine.

In terms of assembly, GTP-bound Ran dissociates the isolated NMD5/TFIIS complex.

The protein resides in the nucleus. It is found in the cytoplasm. Its function is as follows. Active in protein import into the nucleus. Its major import substrate is transcription elongation factor TFIIS. This Saccharomyces cerevisiae (strain ATCC 204508 / S288c) (Baker's yeast) protein is Nonsense-mediated mRNA decay protein 5 (NMD5).